The chain runs to 213 residues: Peroxynitrite isomerase (213 aa).

Over residues M1–A10 the composition is skewed to low complexity. The tract at residues M1 to A26 is disordered. The short motif at G51–G57 is the GXWXGXG element. H203 contacts heme b.

This sequence belongs to the nitrobindin family. As to quaternary structure, homodimer. The cofactor is heme b.

The catalysed reaction is peroxynitrite = nitrate. Its pathway is nitrogen metabolism. Its function is as follows. Heme-binding protein able to scavenge peroxynitrite and to protect free L-tyrosine against peroxynitrite-mediated nitration, by acting as a peroxynitrite isomerase that converts peroxynitrite to nitrate. Therefore, this protein likely plays a role in peroxynitrite sensing and in the detoxification of reactive nitrogen and oxygen species (RNS and ROS, respectively). Is able to bind nitric oxide (NO) in vitro, but may act as a sensor of peroxynitrite levels in vivo. The polypeptide is Peroxynitrite isomerase (Parafrankia sp. (strain EAN1pec)).